Reading from the N-terminus, the 318-residue chain is Phosphatidylglycerol--prolipoprotein diacylglyceryl transferase (318 aa).

7 consecutive transmembrane segments (helical) span residues 23-43, 59-79, 98-118, 124-146, 192-212, 219-239, and 253-273; these read PLTI…GAWL, MDII…YHVI, IWEG…GAAI, GVRL…AMGR, FQPT…LLVF, LGAG…RFIF, and LRVN…VFLI. Arginine 146 is a binding site for a 1,2-diacyl-sn-glycero-3-phospho-(1'-sn-glycerol). The span at 293 to 312 shows a compositional bias: basic and acidic residues; sequence FDTRANGHDPEKHDETDGKG. Positions 293 to 318 are disordered; it reads FDTRANGHDPEKHDETDGKGNRHHVP.

This sequence belongs to the Lgt family.

The protein localises to the cell membrane. The enzyme catalyses L-cysteinyl-[prolipoprotein] + a 1,2-diacyl-sn-glycero-3-phospho-(1'-sn-glycerol) = an S-1,2-diacyl-sn-glyceryl-L-cysteinyl-[prolipoprotein] + sn-glycerol 1-phosphate + H(+). Its pathway is protein modification; lipoprotein biosynthesis (diacylglyceryl transfer). Its function is as follows. Catalyzes the transfer of the diacylglyceryl group from phosphatidylglycerol to the sulfhydryl group of the N-terminal cysteine of a prolipoprotein, the first step in the formation of mature lipoproteins. The chain is Phosphatidylglycerol--prolipoprotein diacylglyceryl transferase from Paenarthrobacter aurescens (strain TC1).